A 235-amino-acid polypeptide reads, in one-letter code: Orotidine 5'-phosphate decarboxylase (235 aa).

Residues D10, K33, 60–69, T123, R185, Q194, G214, and R215 each bind substrate; that span reads DLKMNDIPNT. K62 (proton donor) is an active-site residue.

Belongs to the OMP decarboxylase family. Type 1 subfamily. As to quaternary structure, homodimer.

It carries out the reaction orotidine 5'-phosphate + H(+) = UMP + CO2. It participates in pyrimidine metabolism; UMP biosynthesis via de novo pathway; UMP from orotate: step 2/2. Catalyzes the decarboxylation of orotidine 5'-monophosphate (OMP) to uridine 5'-monophosphate (UMP). The chain is Orotidine 5'-phosphate decarboxylase from Lactobacillus johnsonii (strain CNCM I-12250 / La1 / NCC 533).